The primary structure comprises 368 residues: Germination protease (368 aa).

A propeptide spanning residues methionine 1–aspartate 15 is cleaved from the precursor.

Belongs to the peptidase A25 family. Homotetramer. Autoproteolytically processed. The inactive tetrameric zymogen termed p46 autoprocesses to a smaller form termed p41, which is active only during spore germination.

It carries out the reaction Endopeptidase action with P4 Glu or Asp, P1 preferably Glu &gt; Asp, P1' hydrophobic and P2' Ala.. Functionally, initiates the rapid degradation of small, acid-soluble proteins during spore germination. The chain is Germination protease from Bacillus anthracis (strain A0248).